The following is a 758-amino-acid chain: MAVSARSARTSPGSDKVQKDKAELISGPRQDSLMGKLLGFEWTDLSSWRRLVTLLNRPTDPASLAVFRFLFGFLMVLDIPQERGLSSLDRKYLDGLDVCRFPLLDALRPLPLDWMYLVYTIMFLGALGMMLGLCYRISCVLFLLPYWYVFLLDKTSWNNHSYLYGLLAFQLTFMDANHYWSVDGLLNARRRNAHVPLWNYAVLRGQIFIVYFIAGVKKLDADWVEGYSMEYLSRHWLFSPFKLLLSEELTSLLVVHWGGLLLDLSAGFLLFFDASRSIGLFFVSYFHCMNSQLFSIGMFSYVMLASSPLFCSPEWPRKLVSYCPQRLQELLPLKAAPQPSVSCVYKRSRGKSGQKPGLRHQLGAAFTLLYLLEQLFLPYSHFLTQGYNNWTNGLYGYSWDMMVHSRSHQHVKITYRDGRTGELGYLNPGVFTQSRRWKDHADMLKQYATCLSRLLPKYNVTEPQIYFDIWVSINDRFQQRIFDPRVDIVQAAWSPFQRTSWVQPLLMDLSPWRAKLQEIKSSLDNHTEVVFIADFPGLHLENFVSEDLGNTSIQLLQGEVTVELVAEQKNQTLREGEKMQLPAGEYHKVYTTSPSPSCYMYVYVNTTELALEQDLAYLQELKEKVENGSETGPLPPELQPLLEGEVKGGPEPTPLVQTFLRRQQRLQEIERRRNTPFHERFFRFLLRKLYVFRRSFLMTCISLRNLILGRPSLEQLAQEVTYANLRPFEQVGELSPSNMDSSHSNPPESNPDPVHSEF.

A disordered region spans residues 1-21; sequence MAVSARSARTSPGSDKVQKDK. A2 is subject to N-acetylalanine. Over 2–60 the chain is Cytoplasmic; sequence AVSARSARTSPGSDKVQKDKAELISGPRQDSLMGKLLGFEWTDLSSWRRLVTLLNRPTD. The helical transmembrane segment at 61-81 threads the bilayer; sequence PASLAVFRFLFGFLMVLDIPQ. Over 82–113 the chain is Lumenal; that stretch reads ERGLSSLDRKYLDGLDVCRFPLLDALRPLPLD. C99 and C450 are disulfide-bonded. A helical membrane pass occupies residues 114-134; sequence WMYLVYTIMFLGALGMMLGLC. Over 135 to 136 the chain is Cytoplasmic; that stretch reads YR. Residues 137–157 traverse the membrane as a helical segment; the sequence is ISCVLFLLPYWYVFLLDKTSW. Over 158 to 292 the chain is Lumenal; that stretch reads NNHSYLYGLL…VSYFHCMNSQ (135 aa). A helical membrane pass occupies residues 293-313; that stretch reads LFSIGMFSYVMLASSPLFCSP. Residues 314 to 361 lie on the Cytoplasmic side of the membrane; sequence EWPRKLVSYCPQRLQELLPLKAAPQPSVSCVYKRSRGKSGQKPGLRHQ. Residues 362–382 form a helical membrane-spanning segment; that stretch reads LGAAFTLLYLLEQLFLPYSHF. The Lumenal segment spans residues 383–758; that stretch reads LTQGYNNWTN…SNPDPVHSEF (376 aa). The tract at residues 732–758 is disordered; it reads GELSPSNMDSSHSNPPESNPDPVHSEF. Residues 735 to 747 are compositionally biased toward polar residues; that stretch reads SPSNMDSSHSNPP.

Belongs to the vitamin K-dependent gamma-carboxylase family. In terms of assembly, monomer. May interact with CALU.

The protein localises to the endoplasmic reticulum membrane. The catalysed reaction is 4-carboxy-L-glutamyl-[protein] + 2,3-epoxyphylloquinone + H2O + H(+) = phylloquinol + L-glutamyl-[protein] + CO2 + O2. Functionally, mediates the vitamin K-dependent carboxylation of glutamate residues to calcium-binding gamma-carboxyglutamate (Gla) residues with the concomitant conversion of the reduced hydroquinone form of vitamin K to vitamin K epoxide. Catalyzes gamma-carboxylation of various proteins, such as blood coagulation factors (F2, F7, F9 and F10), osteocalcin (BGLAP) or matrix Gla protein (MGP). The chain is Vitamin K-dependent gamma-carboxylase (GGCX) from Pongo abelii (Sumatran orangutan).